The following is a 371-amino-acid chain: D-alanine--D-alanine ligase (371 aa).

An ATP-grasp domain is found at 154–361 (KKLLVAEGLP…YPTLLAAMVD (208 aa)). 182-237 (RERLGLPVFVKPARGGSSIGVSRVSDWAELPAAIEAARRHDPKVIVEAGIAGRELE) contributes to the ATP binding site. 3 residues coordinate Mg(2+): aspartate 316, glutamate 328, and asparagine 330.

Belongs to the D-alanine--D-alanine ligase family. Mg(2+) is required as a cofactor. Requires Mn(2+) as cofactor.

It is found in the cytoplasm. It catalyses the reaction 2 D-alanine + ATP = D-alanyl-D-alanine + ADP + phosphate + H(+). It functions in the pathway cell wall biogenesis; peptidoglycan biosynthesis. In terms of biological role, cell wall formation. The sequence is that of D-alanine--D-alanine ligase from Mycobacterium sp. (strain JLS).